A 484-amino-acid polypeptide reads, in one-letter code: Probable metalloprotease ARX1 (484 aa).

This sequence belongs to the peptidase M24 family. In terms of assembly, component of the nucleoplasmic and cytoplasmic pre-60S ribosomal particles.

It localises to the cytoplasm. The protein resides in the nucleus. Functionally, probable metalloprotease involved in proper assembly of pre-ribosomal particles during the biogenesis of the 60S ribosomal subunit. Accompanies the pre-60S particles to the cytoplasm. This chain is Probable metalloprotease ARX1 (ARX1), found in Yarrowia lipolytica (strain CLIB 122 / E 150) (Yeast).